A 335-amino-acid polypeptide reads, in one-letter code: Ubiquinone biosynthesis protein COQ4, mitochondrial (335 aa).

The transit peptide at 1-10 directs the protein to the mitochondrion; that stretch reads MLRLSLLRST. Positions 210, 211, 214, and 226 each coordinate Zn(2+).

The protein belongs to the COQ4 family. As to quaternary structure, component of a multi-subunit COQ enzyme complex, composed of at least COQ3, COQ4, COQ5, COQ6, COQ7 and COQ9. Interacts with COQ3. Zn(2+) is required as a cofactor.

The protein resides in the mitochondrion inner membrane. The enzyme catalyses 4-hydroxy-3-methoxy-5-(all-trans-hexaprenyl)benzoate + H(+) = 2-methoxy-6-(all-trans-hexaprenyl)phenol + CO2. It participates in cofactor biosynthesis; ubiquinone biosynthesis. Its function is as follows. Lyase that catalyzes the C1-decarboxylation of 4-hydroxy-3-methoxy-5-(all-trans-hexaprenyl)benzoic acid into 2-methoxy-6-(all-trans-hexaprenyl)phenol during ubiquinone biosynthesis. May play a role in organizing a multi-subunit COQ enzyme complex required for coenzyme Q biosynthesis. Required for steady-state levels of COQ3, COQ4, COQ6, COQ7 and COQ9 polypeptides. The sequence is that of Ubiquinone biosynthesis protein COQ4, mitochondrial from Saccharomyces cerevisiae (strain ATCC 204508 / S288c) (Baker's yeast).